The chain runs to 131 residues: UPF0102 protein YraN (131 aa).

Residues 1–19 (MATVPTRSGSPRQLTTKQT) show a composition bias toward polar residues. The interval 1 to 20 (MATVPTRSGSPRQLTTKQTG) is disordered.

The protein belongs to the UPF0102 family.

The chain is UPF0102 protein YraN from Escherichia coli O8 (strain IAI1).